The sequence spans 483 residues: Beta-glucosidase 4 (483 aa).

A beta-D-glucoside is bound by residues glutamine 29, histidine 131, 176 to 177 (NE), tyrosine 310, and glutamate 380. The Proton donor role is filled by glutamate 177. Residue glutamate 380 is the Nucleophile of the active site. N-linked (GlcNAc...) asparagine glycosylation is present at asparagine 398. A beta-D-glucoside is bound by residues tryptophan 429, 436 to 437 (EW), and phenylalanine 445.

This sequence belongs to the glycosyl hydrolase 1 family.

It carries out the reaction Hydrolysis of terminal, non-reducing beta-D-glucosyl residues with release of beta-D-glucose.. The polypeptide is Beta-glucosidase 4 (BGLU4) (Oryza sativa subsp. japonica (Rice)).